A 206-amino-acid polypeptide reads, in one-letter code: Ribosomal RNA large subunit methyltransferase E (206 aa).

S-adenosyl-L-methionine contacts are provided by Gly60, Trp62, Asp80, Asp96, and Asp121. Lys161 serves as the catalytic Proton acceptor.

Belongs to the class I-like SAM-binding methyltransferase superfamily. RNA methyltransferase RlmE family.

The protein resides in the cytoplasm. It carries out the reaction uridine(2552) in 23S rRNA + S-adenosyl-L-methionine = 2'-O-methyluridine(2552) in 23S rRNA + S-adenosyl-L-homocysteine + H(+). Specifically methylates the uridine in position 2552 of 23S rRNA at the 2'-O position of the ribose in the fully assembled 50S ribosomal subunit. This Legionella pneumophila (strain Corby) protein is Ribosomal RNA large subunit methyltransferase E.